The chain runs to 343 residues: Holliday junction branch migration complex subunit RuvB (343 aa).

Residues 1–185 form a large ATPase domain (RuvB-L) region; that stretch reads MMNENLDATG…FGISSRLQYY (185 aa). ATP is bound by residues leucine 24, arginine 25, glycine 66, lysine 69, threonine 70, threonine 71, 132 to 134, arginine 175, tyrosine 185, and arginine 222; that span reads EDY. Threonine 70 lines the Mg(2+) pocket. Residues 186 to 256 form a small ATPAse domain (RuvB-S) region; sequence STELLSGIVE…IAKFGLKALN (71 aa). The tract at residues 259–343 is head domain (RuvB-H); that stretch reads AHGLDEMDNK…GSNQGGLFDN (85 aa). The DNA site is built by arginine 314 and arginine 319.

It belongs to the RuvB family. Homohexamer. Forms an RuvA(8)-RuvB(12)-Holliday junction (HJ) complex. HJ DNA is sandwiched between 2 RuvA tetramers; dsDNA enters through RuvA and exits via RuvB. An RuvB hexamer assembles on each DNA strand where it exits the tetramer. Each RuvB hexamer is contacted by two RuvA subunits (via domain III) on 2 adjacent RuvB subunits; this complex drives branch migration. In the full resolvosome a probable DNA-RuvA(4)-RuvB(12)-RuvC(2) complex forms which resolves the HJ.

Its subcellular location is the cytoplasm. The catalysed reaction is ATP + H2O = ADP + phosphate + H(+). Functionally, the RuvA-RuvB-RuvC complex processes Holliday junction (HJ) DNA during genetic recombination and DNA repair, while the RuvA-RuvB complex plays an important role in the rescue of blocked DNA replication forks via replication fork reversal (RFR). RuvA specifically binds to HJ cruciform DNA, conferring on it an open structure. The RuvB hexamer acts as an ATP-dependent pump, pulling dsDNA into and through the RuvAB complex. RuvB forms 2 homohexamers on either side of HJ DNA bound by 1 or 2 RuvA tetramers; 4 subunits per hexamer contact DNA at a time. Coordinated motions by a converter formed by DNA-disengaged RuvB subunits stimulates ATP hydrolysis and nucleotide exchange. Immobilization of the converter enables RuvB to convert the ATP-contained energy into a lever motion, pulling 2 nucleotides of DNA out of the RuvA tetramer per ATP hydrolyzed, thus driving DNA branch migration. The RuvB motors rotate together with the DNA substrate, which together with the progressing nucleotide cycle form the mechanistic basis for DNA recombination by continuous HJ branch migration. Branch migration allows RuvC to scan DNA until it finds its consensus sequence, where it cleaves and resolves cruciform DNA. The sequence is that of Holliday junction branch migration complex subunit RuvB from Christiangramia forsetii (strain DSM 17595 / CGMCC 1.15422 / KT0803) (Gramella forsetii).